The following is a 249-amino-acid chain: Phosphomannomutase 2 (249 aa).

Asp-12 serves as the catalytic Nucleophile. Mg(2+)-binding residues include Asp-12 and Asp-14. The Proton donor/acceptor role is filled by Asp-14. Alpha-D-mannose 1-phosphate-binding residues include Arg-21, Arg-123, Arg-134, Arg-141, Ser-179, and Asp-181. Position 209 (Asp-209) interacts with Mg(2+).

The protein belongs to the eukaryotic PMM family. In terms of assembly, homodimer.

Its subcellular location is the cytoplasm. It carries out the reaction alpha-D-mannose 1-phosphate = D-mannose 6-phosphate. The protein operates within nucleotide-sugar biosynthesis; GDP-alpha-D-mannose biosynthesis; alpha-D-mannose 1-phosphate from D-fructose 6-phosphate: step 2/2. In terms of biological role, involved in the synthesis of the GDP-mannose and dolichol-phosphate-mannose required for a number of critical mannosyl transfer reactions. The protein is Phosphomannomutase 2 (pmmB) of Dictyostelium discoideum (Social amoeba).